Consider the following 369-residue polypeptide: tRNA/tmRNA (uracil-C(5))-methyltransferase (369 aa).

The S-adenosyl-L-methionine site is built by Q192, Y221, N226, E242, and D302. C327 functions as the Nucleophile in the catalytic mechanism. E361 serves as the catalytic Proton acceptor.

The protein belongs to the class I-like SAM-binding methyltransferase superfamily. RNA M5U methyltransferase family. TrmA subfamily.

The enzyme catalyses uridine(54) in tRNA + S-adenosyl-L-methionine = 5-methyluridine(54) in tRNA + S-adenosyl-L-homocysteine + H(+). It catalyses the reaction uridine(341) in tmRNA + S-adenosyl-L-methionine = 5-methyluridine(341) in tmRNA + S-adenosyl-L-homocysteine + H(+). Its function is as follows. Dual-specificity methyltransferase that catalyzes the formation of 5-methyluridine at position 54 (m5U54) in all tRNAs, and that of position 341 (m5U341) in tmRNA (transfer-mRNA). This Haemophilus ducreyi (strain 35000HP / ATCC 700724) protein is tRNA/tmRNA (uracil-C(5))-methyltransferase.